A 76-amino-acid polypeptide reads, in one-letter code: Small ribosomal subunit protein uS17 (76 aa).

The protein belongs to the universal ribosomal protein uS17 family. In terms of assembly, part of the 30S ribosomal subunit.

Its function is as follows. One of the primary rRNA binding proteins, it binds specifically to the 5'-end of 16S ribosomal RNA. The protein is Small ribosomal subunit protein uS17 of Dinoroseobacter shibae (strain DSM 16493 / NCIMB 14021 / DFL 12).